Consider the following 458-residue polypeptide: tRNA modification GTPase MnmE (458 aa).

(6S)-5-formyl-5,6,7,8-tetrahydrofolate-binding residues include arginine 23, glutamate 87, and arginine 126. Residues 224–380 (GLSMVIVGKP…LKSKIKDLFF (157 aa)) form the TrmE-type G domain. K(+) is bound at residue asparagine 234. GTP is bound by residues 234–239 (NVGKSS), 253–259 (TDIAGTT), and 278–281 (DTAG). Position 238 (serine 238) interacts with Mg(2+). Threonine 253, isoleucine 255, and threonine 258 together coordinate K(+). Position 259 (threonine 259) interacts with Mg(2+). Lysine 458 provides a ligand contact to (6S)-5-formyl-5,6,7,8-tetrahydrofolate.

It belongs to the TRAFAC class TrmE-Era-EngA-EngB-Septin-like GTPase superfamily. TrmE GTPase family. Homodimer. Heterotetramer of two MnmE and two MnmG subunits. K(+) serves as cofactor.

The protein localises to the cytoplasm. Exhibits a very high intrinsic GTPase hydrolysis rate. Involved in the addition of a carboxymethylaminomethyl (cmnm) group at the wobble position (U34) of certain tRNAs, forming tRNA-cmnm(5)s(2)U34. The protein is tRNA modification GTPase MnmE of Clostridium perfringens (strain ATCC 13124 / DSM 756 / JCM 1290 / NCIMB 6125 / NCTC 8237 / Type A).